Here is a 1892-residue protein sequence, read N- to C-terminus: Protein TIC 214 (1892 aa).

6 helical membrane passes run 18 to 38, 64 to 84, 87 to 107, 124 to 144, 172 to 192, and 221 to 241; these read IINS…FSIG, FITG…HLAL, PHTI…WNNH, LSIQ…HFIL, VGWL…LVWI, and IFSI…PSPI. Disordered regions lie at residues 250-300, 794-814, and 1581-1609; these read SKTE…EGWD, REEQ…ENKR, and RIQE…LGPV. The segment covering 256-268 has biased composition (acidic residues); the sequence is VESEEEKDVEIET. The segment covering 1581-1602 has biased composition (basic and acidic residues); the sequence is RIQEEKEPASQGEKERGSDIEN.

It belongs to the TIC214 family. Part of the Tic complex.

Its subcellular location is the plastid. The protein localises to the chloroplast inner membrane. Involved in protein precursor import into chloroplasts. May be part of an intermediate translocation complex acting as a protein-conducting channel at the inner envelope. This chain is Protein TIC 214, found in Nicotiana tomentosiformis (Tobacco).